The following is a 228-amino-acid chain: Sec-independent protein translocase protein TatB (228 aa).

The helical transmembrane segment at 1–21 (MFDFGLGELIFVGIIALIVLG) threads the bilayer. Disordered regions lie at residues 106–164 (TPAD…TDKD) and 196–228 (VPHT…VRKS). Residues 135–151 (PSERSDTSAETLGDDRQ) are compositionally biased toward basic and acidic residues. The span at 206-228 (AINRKRDFRPKHRAKPKLRVRKS) shows a compositional bias: basic residues.

It belongs to the TatB family. The Tat system comprises two distinct complexes: a TatABC complex, containing multiple copies of TatA, TatB and TatC subunits, and a separate TatA complex, containing only TatA subunits. Substrates initially bind to the TatABC complex, which probably triggers association of the separate TatA complex to form the active translocon.

It localises to the cell inner membrane. Functionally, part of the twin-arginine translocation (Tat) system that transports large folded proteins containing a characteristic twin-arginine motif in their signal peptide across membranes. Together with TatC, TatB is part of a receptor directly interacting with Tat signal peptides. TatB may form an oligomeric binding site that transiently accommodates folded Tat precursor proteins before their translocation. This chain is Sec-independent protein translocase protein TatB, found in Neisseria gonorrhoeae (strain ATCC 700825 / FA 1090).